Here is a 1410-residue protein sequence, read N- to C-terminus: Slit homolog 1 protein (1410 aa).

The N-terminal stretch at 1–16 (MLICFIFILLIPESAT) is a signal peptide. The 27-residue stretch at 17–43 (CPAECVCVDRTVSCVGQQLTEVPQNIP) folds into the LRRNT 1 domain. LRR repeat units follow at residues 22–42 (VCVDRTVSCVGQQLTEVPQNI), 43–66 (PNDTIRLDLQDNEITKIGPNDFSS), 67–90 (LMNLKALQLMDNQIVTIHNQSFSS), 91–114 (LVFLQKLRLSRNRIRHLPDNVFQN), 116–138 (LKLTHLDLSENDITVVSDAQLQG), 140–162 (EFLEVLNLDKNHIFCLENNVISS), 163–186 (WVSLEVLTLNGNRLTTFEEPSNAR), 219–242 (TVCATPLNLQGSSIEILQDKFMTC), 286–309 (PPSTTEIRLEQNQISSIPSHSFKN), 310–333 (LKNLTRLDLSKNIITEIQPKAFLG), 335–357 (HNLHTLVLYGNNITDLKSDTFEG), 358–381 (LGSLQLLLLNANQLTCIRRGTFDH), 383–405 (PKLSMLSLYDNDIKSISEVTFQN), 407–430 (TSLSTLHLAKNPLICDCNLQWLAQ), 442–465 (ARCEQPKRLRKKKFATLPPNKFKC), 489–510 (CDCYGTTVDCNKRGLNTIPTSI), 511–535 (PRFATQLLLSGNNISTVDLNSNIHV), 536–559 (LENLEVLDLSNNHITFINDKSFEK), 561–583 (SKLRELRLNDNKLHHFSSMVLDE), and 585–607 (SNLEILDLSGNNIQCFSSIFFNK). Residues 195–243 (NPWNCDCRLRWMRKWLEKAEGQNKTVCATPLNLQGSSIEILQDKFMTCS) enclose the LRRCT 1 domain. The 28-residue stretch at 259–286 (ICPLPCTCTGTTVDCRDSGLTYVPTNLP) folds into the LRRNT 2 domain. The 50-residue stretch at 417–466 (NPLICDCNLQWLAQINLQKNIETSGARCEQPKRLRKKKFATLPPNKFKCK) folds into the LRRCT 2 domain. Positions 484–511 (ICPTQCDCYGTTVDCNKRGLNTIPTSIP) constitute an LRRNT 3 domain. Residues 619–671 (NDLLCDCRILPLMSWLRSNSSHSIDIPPCQQFQYSDNESDKQRCAAFPEETCS) form the LRRCT 3 domain. The LRRNT 4 domain occupies 677 to 703 (CPPKCSCLDRVVRCSNKNLTSFPSRIP). LRR repeat units follow at residues 681–703 (CSCLDRVVRCSNKNLTSFPSRIP), 704–726 (FDTTELYLDANYINEIPAHDLNR), 727–750 (LYSLTKLDLSHNRLISLENNTFSN), 752–774 (TRLSTLIISYNKLRCLQPLAFNG), 775–798 (LNALRILSLHGNDISFLPQSAFSN), and 800–823 (TSITHIAVGSNSLYCDCNMAWFSK). An LRRCT 4 domain is found at 810-859 (NSLYCDCNMAWFSKWIKSKFIEAGIARCEYPNTVSNQLLLTAQPYQFTCD). 2 EGF-like domains span residues 871 to 906 (DLCLNSPCKNNAICETTSSRKYTCNCTPGFYGVHCE) and 908 to 945 (QIDACYGSPCLNNATCKVAQAGRFNCYCNKGFEGDYCE). Intrachain disulfides connect C873/C884, C878/C894, C896/C905, C912/C923, C917/C933, C935/C944, C951/C962, C956/C971, C973/C982, C989/C1002, C996/C1011, C1013/C1022, C1029/C1040, C1034/C1049, C1051/C1060, C1076/C1086, C1081/C1097, and C1099/C1108. Residues 947–983 (NIDDCVNSKCENGGKCVDLINSYRCDCPMEYEGKHCE) enclose the EGF-like 1; calcium-binding domain. An EGF-like 3 domain is found at 985–1023 (KLEYCTKKLNPCENNGKCIPINGSYSCMCSPGFTGNNCE). One can recognise an EGF-like 2; calcium-binding domain in the interval 1025–1061 (NIDDCKNVECQNGGSCVDGILSYDCLCRPGYAGQYCE). The EGF-like 4 domain maps to 1072-1109 (KTDACQQSACGQGECVASQNSSDFTCKCHEGFSGPSCD). The 174-residue stretch at 1112–1285 (MSVGFKNPGA…LENVNTEQSC (174 aa)) folds into the Laminin G-like domain. One copy of the LRR 27 repeat lies at 1197 to 1221 (TSERKCFLQIDKNPVQIVENSGKSD). 8 disulfides stabilise this stretch: C1259-C1285, C1292-C1302, C1297-C1314, C1316-C1325, C1332-C1368, C1346-C1382, C1357-C1398, and C1361-C1400. The EGF-like 5 domain maps to 1288 to 1326 (TVNFCAGIDCGNGKCTNNALSPKGYMCQCDSHFSGEHCD). Residues 1332-1406 (CDKQKFRRHH…QCQCEPTKSV (75 aa)) enclose the CTCK domain.

In terms of assembly, interacts with eva-1.

It localises to the secreted. Functionally, functions as a ligand for sax-3 receptor during larval development. Acts via the sax-3/Robo receptor to direct ventral axon guidance and guidance at the midline during embryonic development. The protein is Slit homolog 1 protein (slt-1) of Caenorhabditis elegans.